Reading from the N-terminus, the 166-residue chain is Putative peroxiredoxin (166 aa).

The Thioredoxin domain maps to 1–166 (EIGSTIPNAT…SSAATVLSKL (166 aa)). Cysteine 56 (cysteine sulfenic acid (-SOH) intermediate) is an active-site residue. A Microbody targeting signal motif is present at residues 164-166 (SKL).

Belongs to the peroxiredoxin family. Prx5 subfamily. Homodimer; disulfide-linked, upon oxidation.

It carries out the reaction a hydroperoxide + [thioredoxin]-dithiol = an alcohol + [thioredoxin]-disulfide + H2O. Thiol-specific peroxidase that catalyzes the reduction of hydrogen peroxide and organic hydroperoxides to water and alcohols, respectively. Plays a role in cell protection against oxidative stress by detoxifying peroxides and as sensor of hydrogen peroxide-mediated signaling events. The chain is Putative peroxiredoxin from Malassezia furfur (Pityriasis versicolor infection agent).